A 574-amino-acid polypeptide reads, in one-letter code: Cytochrome P450 306a1 (574 aa).

The segment covering 303–314 (EKEQLRQSKEAD) has biased composition (basic and acidic residues). The disordered stretch occupies residues 303–333 (EKEQLRQSKEADPSQEQSEADEDDEESDEED). The segment covering 320 to 333 (SEADEDDEESDEED) has biased composition (acidic residues). C505 contributes to the heme binding site.

Belongs to the cytochrome P450 family. Requires heme as cofactor. First seen at the early (syncytial) blastoderm stage 4. During cellularization of the blastoderm (stage 5), stripes of expression appear and remain through to stage 10. Expression becomes undetectable during germ band retraction (stages 11-14). By stage 15, some expression resumes in the primordium of the ring gland, so that by stage 17 strong expression is seen, but only in the ring gland. This specific localization continues throughout the larval instars (at protein level). Expressed in the prothoracic gland cells of the larval ring gland (RG). Levels decline just after the molt to the third instar then increase later during the wandering stage. Low levels of expression are seen in the larval brain and fat body. In the adult, majority of expression is restricted to the ovaries, with low levels in the head and carcass of both sexes.

It is found in the endoplasmic reticulum membrane. The protein resides in the microsome membrane. It carries out the reaction 2,22,25-trideoxyecdysone + 2 reduced [adrenodoxin] + O2 + 2 H(+) = 2,22-dideoxyecdysone + 2 oxidized [adrenodoxin] + H2O. It functions in the pathway steroid biosynthesis; ecdysteroid biosynthesis. Its function is as follows. Involved in the metabolism of insect hormones; responsible for ecdysteroid C25-hydroxylase activity. May be involved in the breakdown of synthetic insecticides. The sequence is that of Cytochrome P450 306a1 from Drosophila melanogaster (Fruit fly).